Consider the following 417-residue polypeptide: Serine hydroxymethyltransferase (417 aa).

(6S)-5,6,7,8-tetrahydrofolate contacts are provided by residues L112 and 116 to 118 (GHL). An N6-(pyridoxal phosphate)lysine modification is found at K221. E247 lines the (6S)-5,6,7,8-tetrahydrofolate pocket.

It belongs to the SHMT family. In terms of assembly, homodimer. Pyridoxal 5'-phosphate is required as a cofactor.

It localises to the cytoplasm. The catalysed reaction is (6R)-5,10-methylene-5,6,7,8-tetrahydrofolate + glycine + H2O = (6S)-5,6,7,8-tetrahydrofolate + L-serine. The protein operates within one-carbon metabolism; tetrahydrofolate interconversion. Its pathway is amino-acid biosynthesis; glycine biosynthesis; glycine from L-serine: step 1/1. Functionally, catalyzes the reversible interconversion of serine and glycine with tetrahydrofolate (THF) serving as the one-carbon carrier. This reaction serves as the major source of one-carbon groups required for the biosynthesis of purines, thymidylate, methionine, and other important biomolecules. Also exhibits THF-independent aldolase activity toward beta-hydroxyamino acids, producing glycine and aldehydes, via a retro-aldol mechanism. This chain is Serine hydroxymethyltransferase, found in Borrelia duttonii (strain Ly).